A 456-amino-acid chain; its full sequence is E3 ubiquitin-protein ligase RNF25 (456 aa).

In terms of domain architecture, RWD spans 18-127 (SEVEVLESIY…EKGKEILTDN (110 aa)). Residues C134, C137, C152, H154, H157, C160, C195, and C198 each coordinate Zn(2+). Residues 134 to 199 (CVICLYGFQE…AVGVQCPVCR (66 aa)) form an RING-type zinc finger. Residues 269–456 (LEPESAVDVS…PLGLESEEGS (188 aa)) form a disordered region. Positions 288–332 (SAEQSTSLADQSTLPTSLPMTTQYTYEKTSGAGPNQQRPGETQKS) are enriched in polar residues. 2 stretches are compositionally biased toward basic and acidic residues: residues 364-388 (SEIHELPPPEKPLKETVDLKAEPRN) and 410-421 (RTRDCARWERSK).

This sequence belongs to the RNF25 family. Interacts with UBE2D2, and may also interact with UBE2E1 and UBE2E3. Interacts with RELA/p65. Post-translationally, ubiquitinated; autoubiquitinated. In terms of tissue distribution, ubiquitous.

Its subcellular location is the cytoplasm. It catalyses the reaction S-ubiquitinyl-[E2 ubiquitin-conjugating enzyme]-L-cysteine + [acceptor protein]-L-lysine = [E2 ubiquitin-conjugating enzyme]-L-cysteine + N(6)-ubiquitinyl-[acceptor protein]-L-lysine.. It functions in the pathway protein modification; protein ubiquitination. E3 ubiquitin-protein ligase that plays a key role in the RNF14-RNF25 translation quality control pathway, a pathway that takes place when a ribosome has stalled during translation, and which promotes ubiquitination and degradation of translation factors on stalled ribosomes. Catalyzes ubiquitination of RPS27A in response to ribosome collisions, promoting activation of RNF14. RNF25 catalyzes ubiquitination of other ribosomal proteins on stalled ribosomes, such as RPL0, RPL1, RPL12, RPS13 and RPS17. Also involved in ubiquitination and degradation of stalled ETF1/eRF1. Independently of its function in the response to stalled ribosomes, mediates ubiquitination and subsequent proteasomal degradation of NKD2. May also stimulate transcription mediated by NF-kappa-B via its interaction with RELA/p65. The polypeptide is E3 ubiquitin-protein ligase RNF25 (Mus musculus (Mouse)).